The following is a 240-amino-acid chain: UDP-2,3-diacylglucosamine hydrolase (240 aa).

Residues D8, H10, D41, N79, and H114 each coordinate Mn(2+). 79–80 (NR) contributes to the substrate binding site. D122, S160, N164, K167, and H195 together coordinate substrate. Positions 195 and 197 each coordinate Mn(2+).

Belongs to the LpxH family. Requires Mn(2+) as cofactor.

The protein resides in the cell inner membrane. It carries out the reaction UDP-2-N,3-O-bis[(3R)-3-hydroxytetradecanoyl]-alpha-D-glucosamine + H2O = 2-N,3-O-bis[(3R)-3-hydroxytetradecanoyl]-alpha-D-glucosaminyl 1-phosphate + UMP + 2 H(+). It functions in the pathway glycolipid biosynthesis; lipid IV(A) biosynthesis; lipid IV(A) from (3R)-3-hydroxytetradecanoyl-[acyl-carrier-protein] and UDP-N-acetyl-alpha-D-glucosamine: step 4/6. Hydrolyzes the pyrophosphate bond of UDP-2,3-diacylglucosamine to yield 2,3-diacylglucosamine 1-phosphate (lipid X) and UMP by catalyzing the attack of water at the alpha-P atom. Involved in the biosynthesis of lipid A, a phosphorylated glycolipid that anchors the lipopolysaccharide to the outer membrane of the cell. This is UDP-2,3-diacylglucosamine hydrolase from Escherichia fergusonii (strain ATCC 35469 / DSM 13698 / CCUG 18766 / IAM 14443 / JCM 21226 / LMG 7866 / NBRC 102419 / NCTC 12128 / CDC 0568-73).